A 419-amino-acid polypeptide reads, in one-letter code: Adenylosuccinate synthetase (419 aa).

GTP contacts are provided by residues G12–K18 and G40–T42. D13 serves as the catalytic Proton acceptor. D13 and G40 together coordinate Mg(2+). Residues D13–K16, N38–H41, T128, R142, Q220, T235, and R299 each bind IMP. The active-site Proton donor is the H41. Residue S295–R301 participates in substrate binding. GTP-binding positions include R301, K327–D329, and S407–G409.

It belongs to the adenylosuccinate synthetase family. As to quaternary structure, homodimer. It depends on Mg(2+) as a cofactor.

It is found in the cytoplasm. It carries out the reaction IMP + L-aspartate + GTP = N(6)-(1,2-dicarboxyethyl)-AMP + GDP + phosphate + 2 H(+). It participates in purine metabolism; AMP biosynthesis via de novo pathway; AMP from IMP: step 1/2. In terms of biological role, plays an important role in the de novo pathway of purine nucleotide biosynthesis. Catalyzes the first committed step in the biosynthesis of AMP from IMP. This chain is Adenylosuccinate synthetase, found in Azobacteroides pseudotrichonymphae genomovar. CFP2.